The chain runs to 413 residues: PCI domain-containing protein 2 homolog (413 aa).

The region spanning 222-403 is the PCI domain; that stretch reads VAYNYFLGRK…QKLVISKTNA (182 aa).

This sequence belongs to the CSN12 family.

The sequence is that of PCI domain-containing protein 2 homolog from Caenorhabditis briggsae.